A 183-amino-acid polypeptide reads, in one-letter code: Ribosome rescue factor SmrB (183 aa).

One can recognise a Smr domain in the interval 98–173 (LDLHGLTQLQ…GDAALLVLIE (76 aa)).

Belongs to the SmrB family. Associates with collided ribosomes, but not with correctly translating polysomes.

In terms of biological role, acts as a ribosome collision sensor. Detects stalled/collided disomes (pairs of ribosomes where the leading ribosome is stalled and a second ribosome has collided with it) and endonucleolytically cleaves mRNA at the 5' boundary of the stalled ribosome. Stalled/collided disomes form a new interface (primarily via the 30S subunits) that binds SmrB. Cleaved mRNA becomes available for tmRNA ligation, leading to ribosomal subunit dissociation and rescue of stalled ribosomes. The protein is Ribosome rescue factor SmrB of Escherichia coli O7:K1 (strain IAI39 / ExPEC).